The primary structure comprises 294 residues: 4-diphosphocytidyl-2-C-methyl-D-erythritol kinase (294 aa).

Lys-23 is an active-site residue. Residue 106 to 116 (PMGGGLGGGSS) coordinates ATP. Asp-148 is an active-site residue.

The protein belongs to the GHMP kinase family. IspE subfamily.

The catalysed reaction is 4-CDP-2-C-methyl-D-erythritol + ATP = 4-CDP-2-C-methyl-D-erythritol 2-phosphate + ADP + H(+). Its pathway is isoprenoid biosynthesis; isopentenyl diphosphate biosynthesis via DXP pathway; isopentenyl diphosphate from 1-deoxy-D-xylulose 5-phosphate: step 3/6. Functionally, catalyzes the phosphorylation of the position 2 hydroxy group of 4-diphosphocytidyl-2C-methyl-D-erythritol. The chain is 4-diphosphocytidyl-2-C-methyl-D-erythritol kinase from Nitrosospira multiformis (strain ATCC 25196 / NCIMB 11849 / C 71).